The chain runs to 211 residues: Pyridoxine/pyridoxamine 5'-phosphate oxidase (211 aa).

Residues 7–10 (RRDY) and lysine 65 contribute to the substrate site. Residues 60–65 (RIVLLK), 75–76 (YT), arginine 81, lysine 82, and glutamine 104 each bind FMN. Residues tyrosine 122, arginine 126, and serine 130 each coordinate substrate. FMN contacts are provided by residues 139–140 (QS) and tryptophan 184. 190–192 (RLH) serves as a coordination point for substrate. FMN is bound at residue arginine 194.

This sequence belongs to the pyridoxamine 5'-phosphate oxidase family. In terms of assembly, homodimer. The cofactor is FMN.

The catalysed reaction is pyridoxamine 5'-phosphate + O2 + H2O = pyridoxal 5'-phosphate + H2O2 + NH4(+). It catalyses the reaction pyridoxine 5'-phosphate + O2 = pyridoxal 5'-phosphate + H2O2. It functions in the pathway cofactor metabolism; pyridoxal 5'-phosphate salvage; pyridoxal 5'-phosphate from pyridoxamine 5'-phosphate: step 1/1. It participates in cofactor metabolism; pyridoxal 5'-phosphate salvage; pyridoxal 5'-phosphate from pyridoxine 5'-phosphate: step 1/1. In terms of biological role, catalyzes the oxidation of either pyridoxine 5'-phosphate (PNP) or pyridoxamine 5'-phosphate (PMP) into pyridoxal 5'-phosphate (PLP). The sequence is that of Pyridoxine/pyridoxamine 5'-phosphate oxidase from Aliivibrio salmonicida (strain LFI1238) (Vibrio salmonicida (strain LFI1238)).